Reading from the N-terminus, the 482-residue chain is UDP-sulfoquinovose synthase, chloroplastic (482 aa).

A chloroplast-targeting transit peptide spans 1–61 (MAHLLSTSCS…NNTQKLTVVR (61 aa)). Residues 100–101 (YC), 120–124 (DNLVR), 163–164 (DI), arginine 189, and asparagine 207 contribute to the NAD(+) site. Arginine 189 lines the substrate pocket. Substrate contacts are provided by threonine 233 and tyrosine 270. Threonine 233 is a catalytic residue. NAD(+) is bound by residues tyrosine 270 and lysine 274. The active-site Proton acceptor is tyrosine 270. Residue lysine 274 is part of the active site. Glutamine 297 is a substrate binding site. Residue valine 300 participates in NAD(+) binding. Substrate is bound by residues 327–330 (ALNR), 342–344 (TVY), and 415–417 (RVE).

It belongs to the NAD(P)-dependent epimerase/dehydratase family. Homodimer. Interacts with FdGOGAT (via FMN-binding domain). Requires NAD(+) as cofactor. Post-translationally, the N-terminus is blocked.

The protein localises to the plastid. Its subcellular location is the chloroplast stroma. The catalysed reaction is sulfite + UDP-alpha-D-glucose + H(+) = UDP-alpha-D-6-sulfoquinovose + H2O. In terms of biological role, involved in the biosynthesis of sulfolipids found in thylakoid membranes. Converts UDP-glucose and sulfite to the sulfolipid head group precursor UDP-sulfoquinovose. The sulfite is delivered to the reaction center by the FMN-binding domain of FdGOGAT. This is UDP-sulfoquinovose synthase, chloroplastic (SQD1) from Spinacia oleracea (Spinach).